The primary structure comprises 430 residues: Citrate synthase (430 aa).

Catalysis depends on residues H305 and D363.

Belongs to the citrate synthase family. As to quaternary structure, homohexamer.

It catalyses the reaction oxaloacetate + acetyl-CoA + H2O = citrate + CoA + H(+). It functions in the pathway carbohydrate metabolism; tricarboxylic acid cycle; isocitrate from oxaloacetate: step 1/2. Its activity is regulated as follows. Allosterically inhibited by NADH. The polypeptide is Citrate synthase (gltA) (Coxiella burnetii (strain RSA 493 / Nine Mile phase I)).